Consider the following 207-residue polypeptide: Outer-membrane lipoprotein LolB (207 aa).

The signal sequence occupies residues 1–21; the sequence is MPTNTVRCLRLLPLASVLLAA. Cys22 is lipidated: N-palmitoyl cysteine. Residue Cys22 is the site of S-diacylglycerol cysteine attachment.

This sequence belongs to the LolB family. In terms of assembly, monomer.

The protein resides in the cell outer membrane. In terms of biological role, plays a critical role in the incorporation of lipoproteins in the outer membrane after they are released by the LolA protein. The protein is Outer-membrane lipoprotein LolB of Pectobacterium carotovorum subsp. carotovorum (strain PC1).